Consider the following 902-residue polypeptide: 4-hydroxyphenylacetate decarboxylase glycyl radical subunit (902 aa).

The PFL domain occupies 38-774; sequence KRAEDLLDVY…ATLATPDGRL (737 aa). 4-hydroxyphenylacetate-binding residues include Ser348 and Cys507. Residue Cys507 is the Cysteine radical intermediate of the active site. Residue Glu509 is the Proton donor of the active site. 4-hydroxyphenylacetate is bound by residues His540 and Glu641. Residues 782-902 form the Glycine radical domain; that stretch reads GSVSAYAGTD…VIARTEYEGV (121 aa). At Gly877 the chain carries Glycine radical.

Belongs to the glycyl radical enzyme (GRE) family. HPAD subfamily. In terms of assembly, heterooctamer consisting of 4 large (HpdB) subunits and 4 small (HpdC) subunits, arranged as a tetramer of heterodimers. Also forms a catalytically inactive homodimer. In terms of processing, requires the activating protein CsdA to generate the key active site glycyl radical that is involved in catalysis. Phosphorylated on serine. Phosphorylation may trigger the formation of the active heterooctamers and thereby regulates enzyme activity.

It catalyses the reaction 4-hydroxyphenylacetate + H(+) = 4-methylphenol + CO2. The catalysed reaction is 3,4-dihydroxyphenylacetate + H(+) = 4-methylcatechol + CO2. Functionally, glycyl radical subunit of the HPA decarboxylase that decarboxylates phenylacetates with a hydroxyl group in the p-position. Active toward 4-hydroxyphenylacetate and 3,4-dihydroxyphenylacetate, forming 4-methylphenol and 4-methylcatechol, respectively. Is likely involved in the catabolism of aromatic amino acids such as tyrosine fermentation. 4-methylphenol (p-cresol) formation provides metabolic toxicity, which allows an active suppression of other microbes and may provide growth advantages for the producers in highly competitive environments. The large subunit is the catalytic subunit that binds the substrate. In Clostridioides difficile (strain CD196) (Peptoclostridium difficile), this protein is 4-hydroxyphenylacetate decarboxylase glycyl radical subunit.